A 480-amino-acid polypeptide reads, in one-letter code: Glycogen synthase (480 aa).

Lys15 provides a ligand contact to ADP-alpha-D-glucose.

It belongs to the glycosyltransferase 1 family. Bacterial/plant glycogen synthase subfamily.

The enzyme catalyses [(1-&gt;4)-alpha-D-glucosyl](n) + ADP-alpha-D-glucose = [(1-&gt;4)-alpha-D-glucosyl](n+1) + ADP + H(+). Its pathway is glycan biosynthesis; glycogen biosynthesis. Functionally, synthesizes alpha-1,4-glucan chains using ADP-glucose. The protein is Glycogen synthase of Rhizobium rhizogenes (strain K84 / ATCC BAA-868) (Agrobacterium radiobacter).